Reading from the N-terminus, the 154-residue chain is Putative NADPH-dependent 7-cyano-7-deazaguanine reductase (154 aa).

The active-site Proton donor is Asp52. Substrate is bound by residues 67–69 (VES) and 86–87 (HE).

Belongs to the GTP cyclohydrolase I family. QueF type 1 subfamily.

The protein resides in the cytoplasm. It catalyses the reaction 7-aminomethyl-7-carbaguanine + 2 NADP(+) = 7-cyano-7-deazaguanine + 2 NADPH + 3 H(+). It functions in the pathway tRNA modification; tRNA-queuosine biosynthesis. In terms of biological role, catalyzes the NADPH-dependent reduction of 7-cyano-7-deazaguanine (preQ0) to 7-aminomethyl-7-deazaguanine (preQ1). The polypeptide is Putative NADPH-dependent 7-cyano-7-deazaguanine reductase (Streptococcus pneumoniae (strain ATCC BAA-255 / R6)).